A 66-amino-acid chain; its full sequence is MSGKCDNCDCADSTQCVKKGNSYDLVIVETENRSMDTVFVDAPAAEHDGKCKCGTGCSCVSCTCGH.

Belongs to the metallothionein superfamily. Type 15 family.

Metallothioneins have a high content of cysteine residues that bind various heavy metals. The chain is Metallothionein-like protein type 3 (MT2) from Malus domestica (Apple).